Reading from the N-terminus, the 432-residue chain is UPF0761 membrane protein Cag_0935 (432 aa).

6 helical membrane passes run 52-72 (LLSI…FEVF), 108-128 (NIPL…LSTV), 148-168 (FTLY…SLAA), 190-210 (LLAL…YMLV), 220-240 (AFAG…WFLF), and 254-274 (ALSV…VVLV).

The protein belongs to the UPF0761 family.

The protein localises to the cell inner membrane. The protein is UPF0761 membrane protein Cag_0935 of Chlorobium chlorochromatii (strain CaD3).